We begin with the raw amino-acid sequence, 1783 residues long: Trans-splicing factor Raa3, chloroplastic (1783 aa).

A chloroplast-targeting transit peptide spans M1 to S40. 8 disordered regions span residues A97–N378, A420–Q484, A563–K610, S652–A709, A918–S971, R1395–Q1427, P1476–R1506, and V1620–G1639. Over residues D105–G118 the composition is skewed to gly residues. Composition is skewed to low complexity over residues Q126–P157, A186–A205, and A224–Q242. A compositionally biased stretch (basic and acidic residues) spans D256–I273. A compositionally biased stretch (low complexity) spans A277 to P289. The span at L307 to S316 shows a compositional bias: polar residues. Composition is skewed to low complexity over residues S343–N374, A420–S436, R577–G599, P655–S669, S676–A709, S928–A970, and Q1403–D1417. 2 stretches are compositionally biased toward basic residues: residues K1494–R1506 and V1620–A1630. Residues L1713–E1772 form the RAP domain.

In terms of assembly, part of a 1700 kDa complex that includes the precursor RNA to exon 1 and the tscA RNA.

It is found in the plastid. The protein localises to the chloroplast stroma. Required for trans-splicing of exons 1 and 2 of the chloroplast encoded psaA mRNA (a group II intron). May be required for stability of the chloroplast RNA-protein complex in which it is found. This chain is Trans-splicing factor Raa3, chloroplastic (RAA3), found in Chlamydomonas reinhardtii (Chlamydomonas smithii).